Consider the following 146-residue polypeptide: Putative pre-16S rRNA nuclease (146 aa).

Belongs to the YqgF nuclease family.

The protein localises to the cytoplasm. Its function is as follows. Could be a nuclease involved in processing of the 5'-end of pre-16S rRNA. The chain is Putative pre-16S rRNA nuclease from Pseudomonas syringae pv. tomato (strain ATCC BAA-871 / DC3000).